The sequence spans 242 residues: MRCFKATIAYDGAYFLGYAKQPNKLGVQDKIEDALNALGIKSVVIAAGRTDKGVHANNQVLSFHAPKHWNAAKLFYYLAPKLAPHIVLKKLEEKNFHARFDAQKRAYRYLLTKNLKTPFLAPYIACGDYGSLDALNTALKQFTGKHDFSMFKKEGGATTNPKRTIFNAFAYKTFIIGHECVVFKIIGDAFLRSSVRLIIQACVQYSLEKITLAEIQAQIHNLKATIRTPIMANGLYLHRVYY.

The active-site Nucleophile is the aspartate 51. Tyrosine 107 contributes to the substrate binding site.

The protein belongs to the tRNA pseudouridine synthase TruA family. Homodimer.

The enzyme catalyses uridine(38/39/40) in tRNA = pseudouridine(38/39/40) in tRNA. In terms of biological role, formation of pseudouridine at positions 38, 39 and 40 in the anticodon stem and loop of transfer RNAs. This chain is tRNA pseudouridine synthase A, found in Helicobacter pylori (strain ATCC 700392 / 26695) (Campylobacter pylori).